A 145-amino-acid polypeptide reads, in one-letter code: Ribonuclease P protein component (145 aa).

The tract at residues 121 to 145 (PAAAGTMPPARTVHPSSLSPTEPEL) is disordered. Polar residues predominate over residues 134 to 145 (HPSSLSPTEPEL).

This sequence belongs to the RnpA family. Consists of a catalytic RNA component (M1 or rnpB) and a protein subunit.

The catalysed reaction is Endonucleolytic cleavage of RNA, removing 5'-extranucleotides from tRNA precursor.. In terms of biological role, RNaseP catalyzes the removal of the 5'-leader sequence from pre-tRNA to produce the mature 5'-terminus. It can also cleave other RNA substrates such as 4.5S RNA. The protein component plays an auxiliary but essential role in vivo by binding to the 5'-leader sequence and broadening the substrate specificity of the ribozyme. This Xanthomonas axonopodis pv. citri (strain 306) protein is Ribonuclease P protein component.